We begin with the raw amino-acid sequence, 77 residues long: Acyl carrier protein (77 aa).

Residues 2-77 (ADVLERVTKI…DAVTYIESHL (76 aa)) form the Carrier domain. Serine 37 carries the O-(pantetheine 4'-phosphoryl)serine modification.

This sequence belongs to the acyl carrier protein (ACP) family. Post-translationally, 4'-phosphopantetheine is transferred from CoA to a specific serine of apo-ACP by AcpS. This modification is essential for activity because fatty acids are bound in thioester linkage to the sulfhydryl of the prosthetic group.

Its subcellular location is the cytoplasm. It participates in lipid metabolism; fatty acid biosynthesis. In terms of biological role, carrier of the growing fatty acid chain in fatty acid biosynthesis. This is Acyl carrier protein from Bacillus anthracis (strain A0248).